The following is a 456-amino-acid chain: 3-isopropylmalate dehydratase large subunit (456 aa).

[4Fe-4S] cluster-binding residues include Cys-336, Cys-396, and Cys-399.

The protein belongs to the aconitase/IPM isomerase family. LeuC type 1 subfamily. As to quaternary structure, heterodimer of LeuC and LeuD. [4Fe-4S] cluster is required as a cofactor.

It catalyses the reaction (2R,3S)-3-isopropylmalate = (2S)-2-isopropylmalate. It participates in amino-acid biosynthesis; L-leucine biosynthesis; L-leucine from 3-methyl-2-oxobutanoate: step 2/4. Functionally, catalyzes the isomerization between 2-isopropylmalate and 3-isopropylmalate, via the formation of 2-isopropylmaleate. The chain is 3-isopropylmalate dehydratase large subunit from Staphylococcus aureus (strain JH1).